The following is a 233-amino-acid chain: 4'-phosphopantetheinyl transferase psf-1 (233 aa).

Asp-110, Glu-112, and Glu-154 together coordinate Mg(2+). The tract at residues Gly-161–Cys-192 is peptidyl carrier protein binding.

The protein belongs to the P-Pant transferase superfamily. Gsp/Sfp/HetI/AcpT family. Requires Mg(2+) as cofactor.

The catalysed reaction is apo-[peptidyl-carrier protein] + CoA = holo-[peptidyl-carrier protein] + adenosine 3',5'-bisphosphate + H(+). Probably activates the peptidyl carrier protein (PCP) domains of surfactin synthetase by transferring the 4'-phosphopantetheinyl moiety of coenzyme A (CoA) to a serine residue. Required for the production of the lipopeptide antibiotic, surfactin. The polypeptide is 4'-phosphopantetheinyl transferase psf-1 (psf-1) (Bacillus pumilus (Bacillus mesentericus)).